We begin with the raw amino-acid sequence, 147 residues long: Large ribosomal subunit protein bL9 (147 aa).

It belongs to the bacterial ribosomal protein bL9 family.

Functionally, binds to the 23S rRNA. This is Large ribosomal subunit protein bL9 from Campylobacter lari (strain RM2100 / D67 / ATCC BAA-1060).